A 119-amino-acid polypeptide reads, in one-letter code: Large ribosomal subunit protein bL20 (119 aa).

Belongs to the bacterial ribosomal protein bL20 family.

Its function is as follows. Binds directly to 23S ribosomal RNA and is necessary for the in vitro assembly process of the 50S ribosomal subunit. It is not involved in the protein synthesizing functions of that subunit. In Azoarcus sp. (strain BH72), this protein is Large ribosomal subunit protein bL20.